Consider the following 415-residue polypeptide: Nacrein-like protein F (415 aa).

N27 carries N-linked (GlcNAc...) asparagine glycosylation. Positions 33 to 414 (AGFSYDRSIC…KNKVTVYKSF (382 aa)) constitute an Alpha-carbonic anhydrase domain. Residues H132, H134, and H157 each coordinate Zn(2+). Positions 201-297 (DEPDDEECKH…GENGHKHGCR (97 aa)) are disordered. Basic and acidic residues predominate over residues 207 to 219 (ECKHILKGHHPDN). Low complexity predominate over residues 220–289 (NENGNGDNGN…NNGENGNNGE (70 aa)). Repeat copies occupy residues 225-227 (GDN), 228-230 (GNN), 231-233 (GYN), 234-236 (GDN), 237-239 (GNN), 240-242 (GDN), 243-245 (GNN), 246-248 (GYN), 249-251 (GDN), 252-254 (GNN), 255-257 (GVN), 258-260 (GNN), 261-263 (GYN), 264-266 (GDN), 267-269 (GNN), 270-272 (GDN), 273-275 (GNN), 276-278 (GEN), 279-281 (GNN), 282-284 (GEN), 285-286 (GN), and 288-290 (GEN). Residues 225 to 290 (GDNGNNGYNG…NGENGNNGEN (66 aa)) form a 22 X 3 AA approximate tandem repeats of G-X-N region. A substrate-binding site is contributed by 355 to 356 (TT).

The protein belongs to the alpha-carbonic anhydrase family. In terms of assembly, homooligomer; disulfide-linked. May also be disulfide-linked to insoluble organic matrix. Requires Zn(2+) as cofactor. As to expression, expressed in the mantle.

Its subcellular location is the secreted. The protein localises to the extracellular space. It localises to the extracellular matrix. It carries out the reaction hydrogencarbonate + H(+) = CO2 + H2O. Functionally, acts as a negative regulator for calcification in the shells of mollusks. May function both as a calcium concentrator and as a carbonic anhydrase required for production of carbonate ions, which are assembled to CaCO(3) at mineralization sites. Is important for shell formation in both the calcitic prismatic layer and the aragonitic nacreous layer. Shows inhibitory activity of crystal formation when present in free state but, when attached to the insoluble matrix, may regulate the form and size of aragonite crystal. The sequence is that of Nacrein-like protein F from Pinctada fucata (Akoya pearl oyster).